The sequence spans 468 residues: ATP synthase subunit beta (468 aa).

155 to 162 (GGAGVGKT) serves as a coordination point for ATP.

Belongs to the ATPase alpha/beta chains family. As to quaternary structure, F-type ATPases have 2 components, CF(1) - the catalytic core - and CF(0) - the membrane proton channel. CF(1) has five subunits: alpha(3), beta(3), gamma(1), delta(1), epsilon(1). CF(0) has three main subunits: a(1), b(2) and c(9-12). The alpha and beta chains form an alternating ring which encloses part of the gamma chain. CF(1) is attached to CF(0) by a central stalk formed by the gamma and epsilon chains, while a peripheral stalk is formed by the delta and b chains.

The protein resides in the cell membrane. The catalysed reaction is ATP + H2O + 4 H(+)(in) = ADP + phosphate + 5 H(+)(out). Produces ATP from ADP in the presence of a proton gradient across the membrane. The catalytic sites are hosted primarily by the beta subunits. This Enterococcus hirae (strain ATCC 9790 / DSM 20160 / JCM 8729 / LMG 6399 / NBRC 3181 / NCIMB 6459 / NCDO 1258 / NCTC 12367 / WDCM 00089 / R) protein is ATP synthase subunit beta.